The sequence spans 939 residues: Valine--tRNA ligase (939 aa).

A 'HIGH' region motif is present at residues 47–57 (PNVTGILHMGH). A 'KMSKS' region motif is present at residues 563-567 (KLSKS). ATP is bound at residue Lys-566. Residues 874–939 (EHLAKERVRL…QSILDKLASL (66 aa)) adopt a coiled-coil conformation.

Belongs to the class-I aminoacyl-tRNA synthetase family. ValS type 1 subfamily. As to quaternary structure, monomer.

The protein localises to the cytoplasm. It catalyses the reaction tRNA(Val) + L-valine + ATP = L-valyl-tRNA(Val) + AMP + diphosphate. In terms of biological role, catalyzes the attachment of valine to tRNA(Val). As ValRS can inadvertently accommodate and process structurally similar amino acids such as threonine, to avoid such errors, it has a 'posttransfer' editing activity that hydrolyzes mischarged Thr-tRNA(Val) in a tRNA-dependent manner. The sequence is that of Valine--tRNA ligase from Chlamydia trachomatis serovar L2b (strain UCH-1/proctitis).